We begin with the raw amino-acid sequence, 153 residues long: Fucose mutarotase (153 aa).

His24 (proton donor) is an active-site residue. Residue Asp32 coordinates substrate. Asp69 is a catalytic residue. Substrate-binding residues include Met78, Tyr119, Tyr137, and Asn139. Residue Tyr119 is part of the active site.

It belongs to the RbsD / FucU family.

It carries out the reaction alpha-L-fucose = beta-L-fucose. Its function is as follows. Involved in the interconversion between alpha- and beta-L-fucoses. The protein is Fucose mutarotase (fuom) of Danio rerio (Zebrafish).